A 340-amino-acid polypeptide reads, in one-letter code: Alcohol dehydrogenase (340 aa).

The Zn(2+) site is built by C40 and H63.

The protein belongs to the zinc-containing alcohol dehydrogenase family. Zn(2+) serves as cofactor.

It catalyses the reaction a primary alcohol + NAD(+) = an aldehyde + NADH + H(+). It carries out the reaction a secondary alcohol + NAD(+) = a ketone + NADH + H(+). This chain is Alcohol dehydrogenase (adhA), found in Rhizobium meliloti (strain 1021) (Ensifer meliloti).